Consider the following 655-residue polypeptide: Hemagglutinin-esterase-fusion glycoprotein (655 aa).

The N-terminal stretch at 1 to 14 (MFFSLLLVLGLTEA) is a signal peptide. The segment at 15–40 (EKIKICLQKQVNSSFSLHNGFGGNLY) is fusion domain-1. The Extracellular portion of the chain corresponds to 15 to 630 (EKIKICLQKQ…QSDPFYWGSS (616 aa)). 7 cysteine pairs are disulfide-bonded: Cys20–Cys583, Cys120–Cys165, Cys140–Cys188, Cys210–Cys252, Cys229–Cys316, Cys237–Cys289, and Cys346–Cys352. N-linked (GlcNAc...) asparagine; by host glycosylation is found at Asn26 and Asn61. 2 esterase domain-1 regions span residues 41–151 (ATEE…IKLN) and 41–158 (ATEE…NIYE). The Nucleophile role is filled by Ser71. Asn144 and Asn189 each carry an N-linked (GlcNAc...) asparagine; by host glycan. N-acetyl-9-O-acetylneuraminic acid binding stretches follow at residues 151-310 (NFQK…FLLM) and 158-310 (ELAS…FLLM). Esterase domain-2 regions lie at residues 310 to 364 (MPER…YIGE) and 311 to 365 (PERS…IGEA). Fusion domain-2 stretches follow at residues 365 to 650 (ADDH…SGIA) and 366 to 651 (DDHH…GIAI). Residues Asp366 and His369 each act as charge relay system in the active site. 3 N-linked (GlcNAc...) asparagine; by host glycosylation sites follow: Asn395, Asn552, and Asn603. A helical transmembrane segment spans residues 631-651 (LGLAITATISLAALVISGIAI). At 652–655 (CRTK) the chain is on the cytoplasmic side.

It belongs to the influenza viruses hemagglutinin family. As to quaternary structure, homotrimer of disulfide-linked HEF1-HEF2. In natural infection, inactive HEF is matured into HEF1 and HEF2 outside the cell by one or more trypsin-like, arginine-specific endoprotease.

The protein resides in the virion membrane. The protein localises to the host cell membrane. It catalyses the reaction N-acetyl-9-O-acetylneuraminate + H2O = N-acetylneuraminate + acetate + H(+). The catalysed reaction is N-acetyl-4-O-acetylneuraminate + H2O = N-acetylneuraminate + acetate + H(+). Its function is as follows. Binds to the N-acetyl-9-O-acetylneuraminic acid residues on the cell surface, bringing about the attachment of the virus particle to the cell. Plays a major role in the determination of host range restriction and virulence. Class I viral fusion protein. Responsible for penetration of the virus into the cell cytoplasm by mediating the fusion of the membrane of the endocytosed virus particle with the endosomal membrane. Low pH in endosomes induce an irreversible conformational change in HEF2, releasing the fusion hydrophobic peptide. Several trimers are required to form a competent fusion pore. Displays a receptor-destroying activity which is a neuraminidate-O-acetyl esterase. This activity cleaves off any receptor on the cell surface, which would otherwise prevent virions release. These cleavages prevent self-aggregation and ensure the efficient spread of the progeny virus from cell to cell. The chain is Hemagglutinin-esterase-fusion glycoprotein from Homo sapiens (Human).